The sequence spans 364 residues: Peptide chain release factor 2 (364 aa).

Q251 is modified (N5-methylglutamine).

Belongs to the prokaryotic/mitochondrial release factor family. Post-translationally, methylated by PrmC. Methylation increases the termination efficiency of RF2.

The protein localises to the cytoplasm. Its function is as follows. Peptide chain release factor 2 directs the termination of translation in response to the peptide chain termination codons UGA and UAA. The polypeptide is Peptide chain release factor 2 (prfB) (Buchnera aphidicola subsp. Schizaphis graminum (strain Sg)).